Here is a 120-residue protein sequence, read N- to C-terminus: Small ribosomal subunit protein eS24 (120 aa).

The disordered stretch occupies residues 101 to 120; the sequence is RDAGTKQKKGGSKGGQGAKG.

The protein belongs to the eukaryotic ribosomal protein eS24 family.

In Saccharolobus islandicus (strain M.16.4 / Kamchatka #3) (Sulfolobus islandicus), this protein is Small ribosomal subunit protein eS24.